Reading from the N-terminus, the 428-residue chain is Enolase (428 aa).

A (2R)-2-phosphoglycerate-binding site is contributed by glutamine 162. The Proton donor role is filled by glutamate 204. Mg(2+)-binding residues include aspartate 241, glutamate 283, and aspartate 310. (2R)-2-phosphoglycerate is bound by residues lysine 335, arginine 364, serine 365, and lysine 386. The active-site Proton acceptor is lysine 335.

This sequence belongs to the enolase family. Requires Mg(2+) as cofactor.

The protein localises to the cytoplasm. It localises to the secreted. Its subcellular location is the cell surface. It carries out the reaction (2R)-2-phosphoglycerate = phosphoenolpyruvate + H2O. It participates in carbohydrate degradation; glycolysis; pyruvate from D-glyceraldehyde 3-phosphate: step 4/5. Catalyzes the reversible conversion of 2-phosphoglycerate (2-PG) into phosphoenolpyruvate (PEP). It is essential for the degradation of carbohydrates via glycolysis. The protein is Enolase of Rhodococcus jostii (strain RHA1).